A 137-amino-acid chain; its full sequence is Acidic phospholipase A2 PL-II (137 aa).

The first 17 residues, 1-17 (AVCVSLLGASSIRPLPL), serve as a signal peptide directing secretion. 7 cysteine pairs are disulfide-bonded: C28–C89, C44–C136, C46–C62, C61–C117, C68–C110, C78–C103, and C96–C108. Y45, G47, and G49 together coordinate Ca(2+). H65 is a catalytic residue. D66 is a Ca(2+) binding site. D111 is an active-site residue.

It depends on Ca(2+) as a cofactor. In terms of tissue distribution, expressed by the venom gland.

The protein localises to the secreted. The enzyme catalyses a 1,2-diacyl-sn-glycero-3-phosphocholine + H2O = a 1-acyl-sn-glycero-3-phosphocholine + a fatty acid + H(+). Functionally, snake venom phospholipase A2 (PLA2) that may act in the hemostasis system of the prey. Exhibits hydrolytic activities, and prefers the anionic micelles (dPPC with deoxycholate) (54 umol/mg/min) to the zwitterionic micelles (dPPC with Triton X-100) (15 umol/mg/min). PLA2 catalyzes the calcium-dependent hydrolysis of the 2-acyl groups in 3-sn-phosphoglycerides. The chain is Acidic phospholipase A2 PL-II from Walterinnesia aegyptia (Desert black snake).